The chain runs to 107 residues: Metallothionein-1 (107 aa).

Residues 1–2 constitute a propeptide that is removed on maturation; that stretch reads MD.

This sequence belongs to the metallothionein superfamily. Type 7 family.

In terms of biological role, the metallothioneins are involved in the cellular sequestration of toxic metal ions. Binds 12 cadmium ions per molecule. This chain is Metallothionein-1, found in Tetrahymena pigmentosa.